We begin with the raw amino-acid sequence, 229 residues long: Octanoyltransferase (229 aa).

Residues 47–225 enclose the BPL/LPL catalytic domain; that stretch reads PSSPEAVWIL…SLAARFHLAW (179 aa). Residues 89 to 96, 156 to 158, and 169 to 171 contribute to the substrate site; these read RGGEVTHH, AIG, and GLA. Residue Cys-187 is the Acyl-thioester intermediate of the active site.

Belongs to the LipB family.

Its subcellular location is the cytoplasm. It carries out the reaction octanoyl-[ACP] + L-lysyl-[protein] = N(6)-octanoyl-L-lysyl-[protein] + holo-[ACP] + H(+). It functions in the pathway protein modification; protein lipoylation via endogenous pathway; protein N(6)-(lipoyl)lysine from octanoyl-[acyl-carrier-protein]: step 1/2. Catalyzes the transfer of endogenously produced octanoic acid from octanoyl-acyl-carrier-protein onto the lipoyl domains of lipoate-dependent enzymes. Lipoyl-ACP can also act as a substrate although octanoyl-ACP is likely to be the physiological substrate. This chain is Octanoyltransferase, found in Synechococcus sp. (strain CC9902).